Consider the following 98-residue polypeptide: MTPTYMNIMLAFTISLLGMLTYRSHLMASLLCLEGMMMSLFIMTTLIALNTHSPLINIMPIILLVFAACEAAVGLALLVSISNTYGLDYIHNLNLLQC.

Helical transmembrane passes span 1–21 (MTPT…GMLT), 29–49 (SLLC…LIAL), and 61–81 (IILL…LVSI).

The protein belongs to the complex I subunit 4L family. In terms of assembly, core subunit of respiratory chain NADH dehydrogenase (Complex I) which is composed of 45 different subunits.

It is found in the mitochondrion inner membrane. It carries out the reaction a ubiquinone + NADH + 5 H(+)(in) = a ubiquinol + NAD(+) + 4 H(+)(out). In terms of biological role, core subunit of the mitochondrial membrane respiratory chain NADH dehydrogenase (Complex I) which catalyzes electron transfer from NADH through the respiratory chain, using ubiquinone as an electron acceptor. Part of the enzyme membrane arm which is embedded in the lipid bilayer and involved in proton translocation. This Macaca pagensis (Mentawai macaque) protein is NADH-ubiquinone oxidoreductase chain 4L (MT-ND4L).